A 245-amino-acid polypeptide reads, in one-letter code: Eukaryotic translation initiation factor 6 (245 aa).

Y113 is modified (phosphotyrosine). T165 is subject to Phosphothreonine. A Phosphoserine modification is found at S166. Phosphoserine; by CK1 is present on residues S174 and S175. Position 235 is a phosphoserine; by PKC (S235). A phosphoserine mark is found at S239 and S243.

This sequence belongs to the eIF-6 family. As to quaternary structure, monomer. Associates with the 60S ribosomal subunit. Interacts with RACK1. Interacts with DICER1, AGO2, TARBP2, MOV10 and RPL7A; they form a large RNA-induced silencing complex (RISC). Post-translationally, phosphorylation at Ser-174 and Ser-175 by CSNK1D/CK1 promotes nuclear export. Ufmylated by UFL1.

The protein localises to the cytoplasm. It localises to the nucleus. The protein resides in the nucleolus. Its function is as follows. Binds to the 60S ribosomal subunit and prevents its association with the 40S ribosomal subunit to form the 80S initiation complex in the cytoplasm. Behaves as a stimulatory translation initiation factor downstream insulin/growth factors. Is also involved in ribosome biogenesis. Associates with pre-60S subunits in the nucleus and is involved in its nuclear export. Cytoplasmic release of TIF6 from 60S subunits and nuclear relocalization is promoted by a RACK1 (RACK1)-dependent protein kinase C activity. In tissues responsive to insulin, controls fatty acid synthesis and glycolysis by exerting translational control of adipogenic transcription factors such as CEBPB, CEBPD and ATF4 that have G/C rich or uORF in their 5'UTR. Required for ROS-dependent megakaryocyte maturation and platelets formation, controls the expression of mitochondrial respiratory chain genes involved in reactive oxygen species (ROS) synthesis. Involved in miRNA-mediated gene silencing by the RNA-induced silencing complex (RISC). Required for both miRNA-mediated translational repression and miRNA-mediated cleavage of complementary mRNAs by RISC. Modulates cell cycle progression and global translation of pre-B cells, its activation seems to be rate-limiting in tumorigenesis and tumor growth. The chain is Eukaryotic translation initiation factor 6 from Bos taurus (Bovine).